The sequence spans 760 residues: Probable ATP-dependent RNA helicase DDX27 (760 aa).

The interval Met1 to Asp50 is disordered. Over residues Glu13–Gly32 the composition is skewed to acidic residues. Residues Ser23, Ser25, and Ser48 each carry the phosphoserine modification. Residues Phe55–Phe57 carry the Required for interaction with the PEBOW complex motif. The disordered stretch occupies residues Lys80–Ile149. Positions Lys98–Gly122 are enriched in basic and acidic residues. Residues Pro126–Glu148 are compositionally biased toward acidic residues. Phosphoserine occurs at positions 133 and 144. Positions Lys157 to Lys166 match the Nuclear localization signal motif. The short motif at Leu184–Lys212 is the Q motif element. One can recognise a Helicase ATP-binding domain in the interval Ile215–Ile389. Ala228–Thr235 serves as a coordination point for ATP. The short motif at Asp337–Asp340 is the DEAD box element. The Helicase C-terminal domain maps to Ile419 to Ile569. Disordered stretches follow at residues Lys605–Glu624 and Arg679–Lys760. Basic residues-rich tracts occupy residues Lys682–Arg691 and Arg744–Lys760.

This sequence belongs to the DEAD box helicase family. DDX27/DRS1 subfamily. As to quaternary structure, associates with PeBoW complex, composed of BOP1, PES1 and WDR12. Interacts directly with BOP1 and PES1.

It localises to the nucleus. It is found in the nucleolus. The protein localises to the chromosome. The enzyme catalyses ATP + H2O = ADP + phosphate + H(+). Its function is as follows. Probable ATP-dependent RNA helicase. Component of the nucleolar ribosomal RNA (rRNA) processing machinery that regulates 3' end formation of ribosomal 47S rRNA. This is Probable ATP-dependent RNA helicase DDX27 (Ddx27) from Mus musculus (Mouse).